We begin with the raw amino-acid sequence, 561 residues long: Asparagine synthetase [glutamine-hydrolyzing] (561 aa).

The active-site For GATase activity is the cysteine 2. The region spanning 2–191 (CGIWALFGSD…PGHYEVLDLK (190 aa)) is the Glutamine amidotransferase type-2 domain. L-glutamine is bound by residues 49 to 53 (RLAVV), 75 to 77 (NGE), and aspartate 97. An Asparagine synthetase domain is found at 213–536 (HAIYDSVEKL…PGRADWLTHY (324 aa)). ATP is bound by residues leucine 256, isoleucine 288, and 363-364 (SG). Lysine 385 is modified (N6-acetyllysine). Position 545 is a phosphothreonine (threonine 545). Serine 557 carries the post-translational modification Phosphoserine.

The enzyme catalyses L-aspartate + L-glutamine + ATP + H2O = L-asparagine + L-glutamate + AMP + diphosphate + H(+). Its pathway is amino-acid biosynthesis; L-asparagine biosynthesis; L-asparagine from L-aspartate (L-Gln route): step 1/1. The chain is Asparagine synthetase [glutamine-hydrolyzing] (Asns) from Rattus norvegicus (Rat).